A 67-amino-acid polypeptide reads, in one-letter code: ATP synthase F(0) complex subunit 8 (67 aa).

The chain crosses the membrane as a helical span at residues 8–24 (TWFITIVSMLLSLFILM). N6-acetyllysine; alternate is present on K54. An N6-succinyllysine; alternate modification is found at K54. Position 57 is an N6-acetyllysine (K57).

This sequence belongs to the ATPase protein 8 family. As to quaternary structure, component of the ATP synthase complex composed at least of ATP5F1A/subunit alpha, ATP5F1B/subunit beta, ATP5MC1/subunit c (homooctomer), MT-ATP6/subunit a, MT-ATP8/subunit 8, ATP5ME/subunit e, ATP5MF/subunit f, ATP5MG/subunit g, ATP5MK/subunit k, ATP5MJ/subunit j, ATP5F1C/subunit gamma, ATP5F1D/subunit delta, ATP5F1E/subunit epsilon, ATP5PF/subunit F6, ATP5PB/subunit b, ATP5PD/subunit d, ATP5PO/subunit OSCP. ATP synthase complex consists of a soluble F(1) head domain (subunits alpha(3) and beta(3)) - the catalytic core - and a membrane F(0) domain - the membrane proton channel (subunits c, a, 8, e, f, g, k and j). These two domains are linked by a central stalk (subunits gamma, delta, and epsilon) rotating inside the F1 region and a stationary peripheral stalk (subunits F6, b, d, and OSCP). Interacts with PRICKLE3.

Its subcellular location is the mitochondrion membrane. Its function is as follows. Subunit 8, of the mitochondrial membrane ATP synthase complex (F(1)F(0) ATP synthase or Complex V) that produces ATP from ADP in the presence of a proton gradient across the membrane which is generated by electron transport complexes of the respiratory chain. ATP synthase complex consist of a soluble F(1) head domain - the catalytic core - and a membrane F(1) domain - the membrane proton channel. These two domains are linked by a central stalk rotating inside the F(1) region and a stationary peripheral stalk. During catalysis, ATP synthesis in the catalytic domain of F(1) is coupled via a rotary mechanism of the central stalk subunits to proton translocation. In vivo, can only synthesize ATP although its ATP hydrolase activity can be activated artificially in vitro. Part of the complex F(0) domain. This Dasypus novemcinctus (Nine-banded armadillo) protein is ATP synthase F(0) complex subunit 8.